Consider the following 636-residue polypeptide: MSLLHTFWRLPVAVFFEPHEENVLRCPERVLRRLLEDAAVAMRGGGWREDVLMDRVRKRYLRQELRDLGHRVQTYCEDLEGRVSEAEALLNQQCELDEGPSPRTLLQPPCRPRSSSPGTGVAGASAVPHGLYSRHDAITGPVAAPSDAVAASAAAGASSTWLAQCAEQPLPGNVPNYFGITQNDPFIRFHTDFRGEVVNTMFENASTWTFSFGIWYYRLKRGLYTQPRWKRVYHLAQMDNFSISQELLLGVVNALENVTVYPTYDCVLSDLEAAACLLVAYGHALWEGRDPPDSVTAVLSELPQLLPRLADDVSREIAAWEGPVAAGNNYYAYRDSPDLRYYMPLSGGRHYHPGTFDRHVLVRLFHKRGVLQHLPGYGTITEELVQERLSGQVRDDVLSLWSRRLLVGKLGRDVPVFVHEQQYLRSGLTCLAGLLLLWKVTNADSVFAPRTGKFTLADLLGSDAVAGGGLPGGRAGGEEKGYGGRHGRVRNFEFLVQYYIGPWYARDPAVTLSQLFPGLALLAVTESVRSGWDPSRREDSAGGGDGGGAVLMQLSKSNPVADYMFAQSSKQYGDLRRLEVHDALLFHYEHGLGRLLSVTLPRHRVSTLGSSLFNVNDIYELLYFLVLGFLPSVAVL.

Residues 1 to 48 (MSLLHTFWRLPVAVFFEPHEENVLRCPERVLRRLLEDAAVAMRGGGWR) are interaction with major capsid protein/MCP. Residues 97–125 (DEGPSPRTLLQPPCRPRSSSPGTGVAGAS) form a disordered region.

Belongs to the herpesviridae CVC2 protein family. Heterodimerizes with CVC1. Interacts with major capsid protein/MCP and triplex capsid protein 1/TRX1 at the pentamer vertices. Interacts with the large tegument protein/LTP.

The protein localises to the virion. Its subcellular location is the host nucleus. Functionally, capsid vertex-specific component that plays a role during viral DNA encapsidation, assuring correct genome cleavage and presumably stabilizing capsids that contain full-length viral genomes. Participates in the interaction between the capsid and the tegument through interaction with the large tegument protein/LTP. This chain is Capsid vertex component 2, found in Homo sapiens (Human).